We begin with the raw amino-acid sequence, 306 residues long: Mitochondrial basic amino acids transporter (306 aa).

6 helical membrane passes run 2 to 22, 61 to 81, 96 to 116, 153 to 172, 187 to 207, and 255 to 275; these read ALDFLAGCAGGVAGVIVGHPF, GLGSPLMGLTFINALVFGVQG, FLAGAAAGAIQCVICCPMELA, GMVSTLLRETPSFGVYFLTY, LLVPKLLLAGGTSGITSWLST, and LLRAFPVNAATFATVTVVLTY. Solcar repeat units lie at residues 2–86, 90–178, and 190–275; these read ALDF…TLRA, DSPL…MTRA, and PKLL…VLTY. The segment at 284-306 is disordered; sequence DSEAALGTSPTPAGSALAQPSSL. The segment covering 291-306 has biased composition (polar residues); the sequence is TSPTPAGSALAQPSSL.

This sequence belongs to the mitochondrial carrier (TC 2.A.29) family. In terms of tissue distribution, widely expressed, with highest levels in the brain, including cortex, cerebellum, hippocampus and hypothalamus, and moderate levels in liver, kidney, heart and testis.

The protein localises to the mitochondrion inner membrane. The enzyme catalyses L-lysine(out) + L-arginine(in) = L-lysine(in) + L-arginine(out). It carries out the reaction L-histidine(out) + L-arginine(in) = L-histidine(in) + L-arginine(out). The catalysed reaction is L-ornithine(in) + L-arginine(out) = L-ornithine(out) + L-arginine(in). It catalyses the reaction L-homoarginine(in) + L-arginine(out) = L-homoarginine(out) + L-arginine(in). The enzyme catalyses N(omega)-methyl-L-arginine(in) + L-arginine(out) = N(omega)-methyl-L-arginine(out) + L-arginine(in). It carries out the reaction L-arginine(in) = L-arginine(out). The catalysed reaction is L-lysine(in) = L-lysine(out). It catalyses the reaction L-ornithine(in) = L-ornithine(out). The enzyme catalyses L-histidine(out) = L-histidine(in). Its function is as follows. Mitochondrial transporter of arginine, lysine, homoarginine, methylarginine. Transports with a much lesser extent, ornithine and histidine. Does not transport carnitine nor acylcarnitines. Functions by both counter-exchange and uniport mechanisms. Plays a physiological role in the import of basic amino acids into mitochondria for mitochondrial protein synthesis and amino acid degradation. The protein is Mitochondrial basic amino acids transporter (Slc25a29) of Mus musculus (Mouse).